We begin with the raw amino-acid sequence, 342 residues long: UDP-N-acetylenolpyruvoylglucosamine reductase (342 aa).

The FAD-binding PCMH-type domain maps to 17-192 (RFEAAARYAA…AEVTFALPVD (176 aa)). Residue R168 is part of the active site. Catalysis depends on S242, which acts as the Proton donor. The active site involves E338.

Belongs to the MurB family. It depends on FAD as a cofactor.

The protein resides in the cytoplasm. The enzyme catalyses UDP-N-acetyl-alpha-D-muramate + NADP(+) = UDP-N-acetyl-3-O-(1-carboxyvinyl)-alpha-D-glucosamine + NADPH + H(+). The protein operates within cell wall biogenesis; peptidoglycan biosynthesis. Functionally, cell wall formation. The sequence is that of UDP-N-acetylenolpyruvoylglucosamine reductase from Ralstonia nicotianae (strain ATCC BAA-1114 / GMI1000) (Ralstonia solanacearum).